A 127-amino-acid polypeptide reads, in one-letter code: Modulator protein MzrA (127 aa).

Topologically, residues 1–10 are cytoplasmic; sequence MQIPRMSLRQ. A helical membrane pass occupies residues 11-31; sequence LAWSGAVLLLVGTLLLAWSAV. Topologically, residues 32–127 are periplasmic; that stretch reads RQQESTLAIR…RLRDNSHRFG (96 aa).

The protein belongs to the MzrA family. In terms of assembly, interacts with EnvZ.

Its subcellular location is the cell inner membrane. Its function is as follows. Modulates the activity of the EnvZ/OmpR two-component regulatory system, probably by directly modulating EnvZ enzymatic activity and increasing stability of phosphorylated OmpR. Links the two-component systems CpxA/CpxR and EnvZ/OmpR. The sequence is that of Modulator protein MzrA from Escherichia coli (strain K12).